Consider the following 953-residue polypeptide: ALS2 C-terminal-like protein (953 aa).

8 MORN repeats span residues 358 to 380 (YEGE…DGRN), 381 to 403 (HVGN…QASE), 409 to 431 (YKCH…TDEV), 432 to 452 (YKGY…SGPQ), 459 to 479 (YTGH…DGDR), 483 to 505 (YIGM…AGVC), 506 to 528 (YQGT…DDSL), and 529 to 552 (YEGT…NGFT). Residues 796-942 (LFPDTQLLEF…IQKEDMRLHR (147 aa)) enclose the VPS9 domain.

In terms of assembly, homodimer. Forms a heteromeric complex with ALS2. Interacts with ALS2 and RAB5A. Expressed in heart and kidney.

Its subcellular location is the cytoplasm. Its function is as follows. Acts as a guanine nucleotide exchange factor (GEF) for Rab5 GTPase. Regulates the ALS2-mediated endosome dynamics. This is ALS2 C-terminal-like protein (ALS2CL) from Homo sapiens (Human).